Here is a 429-residue protein sequence, read N- to C-terminus: Adenylosuccinate synthetase (429 aa).

GTP-binding positions include 12-18 (GDEGKGK) and 40-42 (GHT). Aspartate 13 (proton acceptor) is an active-site residue. Mg(2+) contacts are provided by aspartate 13 and glycine 40. Residues 13–16 (DEGK), 38–41 (NAGH), threonine 128, arginine 142, glutamine 223, threonine 238, and arginine 302 each bind IMP. The Proton donor role is filled by histidine 41. 298-304 (VNTGRPR) contacts substrate. GTP-binding positions include arginine 304, 330–332 (KLD), and 412–414 (GVG).

This sequence belongs to the adenylosuccinate synthetase family. As to quaternary structure, homodimer. Mg(2+) is required as a cofactor.

The protein resides in the cytoplasm. The catalysed reaction is IMP + L-aspartate + GTP = N(6)-(1,2-dicarboxyethyl)-AMP + GDP + phosphate + 2 H(+). It functions in the pathway purine metabolism; AMP biosynthesis via de novo pathway; AMP from IMP: step 1/2. Plays an important role in the de novo pathway of purine nucleotide biosynthesis. Catalyzes the first committed step in the biosynthesis of AMP from IMP. The chain is Adenylosuccinate synthetase from Micrococcus luteus (strain ATCC 4698 / DSM 20030 / JCM 1464 / CCM 169 / CCUG 5858 / IAM 1056 / NBRC 3333 / NCIMB 9278 / NCTC 2665 / VKM Ac-2230) (Micrococcus lysodeikticus).